The chain runs to 360 residues: Photosystem II protein D1 (360 aa).

3 consecutive transmembrane segments (helical) span residues 29-46, 118-133, and 142-156; these read YIGW…TATS, HFLL…EWEF, and WISV…AASA. His-118 is a binding site for chlorophyll a. Tyr-126 contributes to the pheophytin a binding site. [CaMn4O5] cluster-binding residues include Asp-170 and Glu-189. Residues 197 to 218 traverse the membrane as a helical segment; the sequence is LHQLGVAGVFGGSLFSAMHGSL. His-198 contributes to the chlorophyll a binding site. A quinone is bound by residues His-215 and 264-265; that span reads SF. His-215 contributes to the Fe cation binding site. His-272 contacts Fe cation. Residues 274–288 traverse the membrane as a helical segment; that stretch reads FLGLWPVVGIWFTSM. [CaMn4O5] cluster is bound by residues His-332, Glu-333, Asp-342, and Ala-344. A propeptide spanning residues 345–360 is cleaved from the precursor; that stretch reads SNESLPLALVAPAING.

This sequence belongs to the reaction center PufL/M/PsbA/D family. PSII is composed of 1 copy each of membrane proteins PsbA, PsbB, PsbC, PsbD, PsbE, PsbF, PsbH, PsbI, PsbJ, PsbK, PsbL, PsbM, PsbT, PsbX, PsbY, PsbZ, Psb30/Ycf12, at least 3 peripheral proteins of the oxygen-evolving complex and a large number of cofactors. It forms dimeric complexes. The D1/D2 heterodimer binds P680, chlorophylls that are the primary electron donor of PSII, and subsequent electron acceptors. It shares a non-heme iron and each subunit binds pheophytin, quinone, additional chlorophylls, carotenoids and lipids. D1 provides most of the ligands for the Mn4-Ca-O5 cluster of the oxygen-evolving complex (OEC). There is also a Cl(-1) ion associated with D1 and D2, which is required for oxygen evolution. The PSII complex binds additional chlorophylls, carotenoids and specific lipids. is required as a cofactor. In terms of processing, tyr-161 forms a radical intermediate that is referred to as redox-active TyrZ, YZ or Y-Z. Post-translationally, C-terminally processed by CTPA; processing is essential to allow assembly of the oxygen-evolving complex and thus photosynthetic growth.

It localises to the plastid. The protein resides in the chloroplast thylakoid membrane. The catalysed reaction is 2 a plastoquinone + 4 hnu + 2 H2O = 2 a plastoquinol + O2. Functionally, photosystem II (PSII) is a light-driven water:plastoquinone oxidoreductase that uses light energy to abstract electrons from H(2)O, generating O(2) and a proton gradient subsequently used for ATP formation. It consists of a core antenna complex that captures photons, and an electron transfer chain that converts photonic excitation into a charge separation. The D1/D2 (PsbA/PsbD) reaction center heterodimer binds P680, the primary electron donor of PSII as well as several subsequent electron acceptors. This Antithamnion sp. (Red alga) protein is Photosystem II protein D1.